The primary structure comprises 222 residues: MVKSSLQRILNSHCFAREKEGDKRSATLHASRTMPLLSQHSRGGCSSESSRAALHCCSNLGPGPRWCSYVPHPPLKIPGGRGNSQRDHSLSASVLYSDERLNVTEEPTANDKTRVLSIQSRLTEAKQVTWRAVWNGGGLYIELPAGPSPEGSKDSFAALLEFAEEQLQADHVFICFPKNREDRAALLRTFSFLGFEIVRPGHPLVPKRPDACFMVYTLERED.

Belongs to the ODC antizyme family. As to quaternary structure, interacts with ODC1 and thereby sterically blocks ODC homodimerization. Forms a ternary complex with PSMB4 and OAZ1 before PSMB4 is incorporated into the 20S proteasome. Interacts with AZIN2; this interaction disrupts the interaction between the antizyme and ODC1. Interacts with FAM171A1.

Functionally, ornithine decarboxylase (ODC) antizyme protein that negatively regulates ODC activity and intracellular polyamine biosynthesis and uptake in response to increased intracellular polyamine levels. Binds to ODC monomers, inhibiting the assembly of the functional ODC homodimer, and targets the monomers for ubiquitin-independent proteolytic destruction by the 26S proteasome. Triggers ODC degradation by inducing the exposure of a cryptic proteasome-interacting surface of ODC. Stabilizes AZIN2 by interfering with its ubiquitination. Also inhibits cellular uptake of polyamines by inactivating the polyamine uptake transporter. SMAD1/OAZ1/PSMB4 complex mediates the degradation of the CREBBP/EP300 repressor SNIP1. Involved in the translocation of AZIN2 from ER-Golgi intermediate compartment (ERGIC) to the cytosol. In Mesocricetus auratus (Golden hamster), this protein is Ornithine decarboxylase antizyme 1 (OAZ1).